We begin with the raw amino-acid sequence, 68 residues long: MKTQIVILIVAVLVLQLVSQSDAFLQGIIDTVGKWLGKRGLKNLDQYNDLFDGEISDADIKFLQDLMR.

The first 23 residues, 1-23, serve as a signal peptide directing secretion; the sequence is MKTQIVILIVAVLVLQLVSQSDA. Leu-36 carries the leucine amide modification. The propeptide occupies 37–68; it reads GKRGLKNLDQYNDLFDGEISDADIKFLQDLMR.

The protein belongs to the non-disulfide-bridged peptide (NDBP) superfamily. Short antimicrobial peptide (group 4) family. Expressed by the venom gland.

It localises to the secreted. Its subcellular location is the target cell membrane. In terms of biological role, antimicrobial peptide with weak activity against all bacteria tested (MIC&gt;100 uM) and all yeasts tested (MIC&gt;200 uM). Also provokes weak hemolysis on human erythrocytes (HC(50)=83.7 uM). This Mesomexovis punctatus (Scorpion) protein is Antimicrobial peptide VpCT3.